The chain runs to 478 residues: MTSWRHDSLGASSSEPLPVVIIGNGPSGICLSYLLSGHIPYVKPGAVHPHPLLQRKLAEAPGVSILDQDLEYLSEGLEGRSQSPVALLFDALLRPDTDFGGSIDSVLSWKRQKDRAVPHLVLGRNLPGGAWHSIEGSMVTLSQGQWMSLPDLQVKDWMRKKCRGLRNSRATAGDIAHYYRDYVIKKGLSHNFVSGAVVTAVEWAKSEHGSPEVQASSPLFQVNGYLTTKDHGHQPFSLRARNVVLATGTFDSPAMLGIPGETLPFVHHDLSALEAALRAGTVNPTSDPVLIVGAGLSAADAVLFARHYNIQVIHAFRRSVHDPGLVFNQLPKMLYPEYHKVQQMMRDQSILSPSPYEGYRSLPEHQPLLFKEDHQAVFQDPQGGQQLFGVSMVLVLIGSHPDLSYLPRAGADLVIDPDQPLSPKRNPIDVDPFTHESTHQEGLYALGPLAGDNFVRFVQGGALAAASSLLKKETRKPP.

Position 12 is a phosphoserine (Ser-12).

It belongs to the OKL38 family. The cofactor is NADPH.

It is found in the midbody. Its function is as follows. Monooxygenase catalytic activity. Involved in regulation of cytokinesis; promotes RHOA activity, probably acting locally at the midbody in late cytokinesis. Monooxygenase activity is involved in stabilizing transient structures between daughter cells, termed intercellular bridges, before abscission. Regulates differentiation and proliferation through the regulation of cell death. This Mus musculus (Mouse) protein is Oxidative stress-induced growth inhibitor 1.